Here is a 327-residue protein sequence, read N- to C-terminus: Metaxin-1 homolog (327 aa).

The chain crosses the membrane as a helical span at residues 281–301; that stretch reads IVAGVGAVLAMGAFAAWRGIY.

This sequence belongs to the metaxin family. In terms of assembly, associates with the mitochondrial contact site and cristae organizing system (MICOS) complex (also known as MINOS or MitOS complex).

It localises to the mitochondrion outer membrane. Involved in transport of proteins into the mitochondrion. Essential for embryonic development. The chain is Metaxin-1 homolog from Drosophila melanogaster (Fruit fly).